Consider the following 322-residue polypeptide: Formimidoylglutamase (322 aa).

Mn(2+)-binding residues include histidine 127, aspartate 163, histidine 165, aspartate 167, aspartate 254, and aspartate 256.

It belongs to the arginase family. The cofactor is Mn(2+).

The enzyme catalyses N-formimidoyl-L-glutamate + H2O = formamide + L-glutamate. It functions in the pathway amino-acid degradation; L-histidine degradation into L-glutamate; L-glutamate from N-formimidoyl-L-glutamate (hydrolase route): step 1/1. Catalyzes the conversion of N-formimidoyl-L-glutamate to L-glutamate and formamide. The sequence is that of Formimidoylglutamase from Paraburkholderia xenovorans (strain LB400).